A 2727-amino-acid chain; its full sequence is E3 ubiquitin-protein ligase Ufd4 (2727 aa).

Disordered regions lie at residues 247–271 (THSS…TNSD) and 365–389 (RGSN…TDRT). Residues 365 to 374 (RGSNNPNQGQ) are compositionally biased toward polar residues. ANK repeat units follow at residues 422–451 (VGQT…DVNK), 453–482 (QRSS…YPDL), and 486–518 (DGKT…WMSP). Positions 682–702 (AQRSSTSVVVAPRPTSDDPME) are disordered. The 71-residue stretch at 1322–1392 (QIRAQLKHMT…KYDLKLADCE (71 aa)) folds into the MIB/HERC2 domain. Polar residues-rich tracts occupy residues 1401–1430 (QSMG…STPS) and 1437–1448 (KNQNPEGASNQT). Disordered stretches follow at residues 1401–1448 (QSMG…SNQT), 1483–1512 (NTSS…GPSP), 1570–1592 (ESVT…REND), 1845–1871 (YPSL…QQSA), 1905–1930 (ALLG…DEYE), and 2092–2115 (STCL…ASTL). The segment covering 1575-1592 (SQSSSHPDVQSSSPREND) has biased composition (low complexity). Residues 1909-1930 (DLDDEDDMDEDNDEEENEDEYE) are compositionally biased toward acidic residues. The segment covering 2104–2115 (PDVSSKSGASTL) has biased composition (polar residues). The HECT domain occupies 2289–2727 (RKSVLEVEFL…ATKEKGFHLN (439 aa)). Cys2696 functions as the Glycyl thioester intermediate in the catalytic mechanism.

The protein belongs to the UPL family. K-HECT subfamily.

The catalysed reaction is S-ubiquitinyl-[E2 ubiquitin-conjugating enzyme]-L-cysteine + [acceptor protein]-L-lysine = [E2 ubiquitin-conjugating enzyme]-L-cysteine + N(6)-ubiquitinyl-[acceptor protein]-L-lysine.. The protein operates within protein modification; protein ubiquitination. Its function is as follows. E3 ubiquitin-protein ligase which accepts ubiquitin from an E2 ubiquitin-conjugating enzyme in the form of a thioester and then directly transfers the ubiquitin to targeted substrates. Involved in the negative regulation of the Ras/MAPK signaling pathway in the wing by acting with the E2 enzyme Unc6 and the putative E3 ligases poe and Kcmf1 to mediate the ubiquitination and proteasomal degradation of rl/MAPK. The polypeptide is E3 ubiquitin-protein ligase Ufd4 (Drosophila melanogaster (Fruit fly)).